Here is a 394-residue protein sequence, read N- to C-terminus: Chalcone synthase 2 (394 aa).

Cysteine 167 is an active-site residue.

Belongs to the thiolase-like superfamily. Chalcone/stilbene synthases family.

The enzyme catalyses (E)-4-coumaroyl-CoA + 3 malonyl-CoA + 3 H(+) = 2',4,4',6'-tetrahydroxychalcone + 3 CO2 + 4 CoA. Its pathway is secondary metabolite biosynthesis; flavonoid biosynthesis. Its function is as follows. The primary product of this enzyme is 4,2',4',6'-tetrahydroxychalcone (also termed naringenin-chalcone or chalcone) which can under specific conditions spontaneously isomerize into naringenin. This chain is Chalcone synthase 2 (CHS2), found in Secale cereale (Rye).